A 342-amino-acid polypeptide reads, in one-letter code: Adenylate isopentenyltransferase 6, chloroplastic (342 aa).

The N-terminal 33 residues, Met-1–Thr-33, are a transit peptide targeting the chloroplast. Residue Gly-52 to Ser-59 participates in ATP binding.

It belongs to the IPP transferase family. Expressed in siliques, at the mRNA level.

It is found in the plastid. The protein resides in the chloroplast. It carries out the reaction dimethylallyl diphosphate + ADP = N(6)-(dimethylallyl)adenosine 5'-diphosphate + diphosphate. The enzyme catalyses dimethylallyl diphosphate + ATP = N(6)-(dimethylallyl)adenosine 5'-triphosphate + diphosphate. Functionally, involved in cytokinin biosynthesis. Catalyzes the transfer of an isopentenyl group from dimethylallyl diphosphate (DMAPP) to ATP and ADP. This chain is Adenylate isopentenyltransferase 6, chloroplastic (IPT6), found in Arabidopsis thaliana (Mouse-ear cress).